Here is a 760-residue protein sequence, read N- to C-terminus: BMP/retinoic acid-inducible neural-specific protein 1 (760 aa).

The N-terminal stretch at 1-16 (MNWRFVELLYFLFVWG) is a signal peptide. The MACPF domain maps to 68 to 251 (RYKIYREFAR…FVQSALSYIM (184 aa)). Residues Asn-156, Asn-433, Asn-443, Asn-553, Asn-599, Asn-630, and Asn-676 are each glycosylated (N-linked (GlcNAc...) asparagine).

Belongs to the BRINP family. Expressed in brain. Expressed in GABAergic neurons of the pre-frontal cortex. Weakly expressed in embryonic stem (ES) cells and in ES-derived neural stem cells (NSCs).

The protein resides in the cytoplasm. In terms of biological role, plays a role in neurogenesis, brain development, and the functioning of GABAergic neurons. May suppress cell cycle progression in postmitotic neurons by inhibiting G1/S transition. This Mus musculus (Mouse) protein is BMP/retinoic acid-inducible neural-specific protein 1 (Brinp1).